A 361-amino-acid polypeptide reads, in one-letter code: Dihydroorotate dehydrogenase (quinone) (361 aa).

FMN-binding positions include A69 to K73 and T93. A substrate-binding site is contributed by K73. Residue N118–F122 participates in substrate binding. Residues N147 and N180 each contribute to the FMN site. N180 provides a ligand contact to substrate. The Nucleophile role is filled by S183. N185 is a substrate binding site. 2 residues coordinate FMN: K221 and T249. Residue N250 to T251 coordinates substrate. FMN contacts are provided by residues G271, G300, and Y321–T322.

The protein belongs to the dihydroorotate dehydrogenase family. Type 2 subfamily. In terms of assembly, monomer. Requires FMN as cofactor.

Its subcellular location is the cell membrane. The catalysed reaction is (S)-dihydroorotate + a quinone = orotate + a quinol. It functions in the pathway pyrimidine metabolism; UMP biosynthesis via de novo pathway; orotate from (S)-dihydroorotate (quinone route): step 1/1. Functionally, catalyzes the conversion of dihydroorotate to orotate with quinone as electron acceptor. In Roseiflexus sp. (strain RS-1), this protein is Dihydroorotate dehydrogenase (quinone).